The chain runs to 396 residues: Pre-mycofactocin synthase (396 aa).

The region spanning Met1 to Gly383 is the FMN hydroxy acid dehydrogenase domain. FMN is bound by residues Ser108, Gln128, Thr156, and Lys254. His278 serves as the catalytic Proton acceptor. FMN contacts are provided by residues Asp309 to Arg313 and Gly332 to Arg333.

Belongs to the FMN-dependent alpha-hydroxy acid dehydrogenase family. The cofactor is FMN.

The catalysed reaction is 3-amino-5-[(4-hydroxyphenyl)methyl]-4,4-dimethyl-2-pyrrolidin-2-one + O2 + H2O = pre-mycofactocin + H2O2 + NH4(+). In terms of biological role, involved in the biosynthesis of the enzyme cofactor mycofactocin (MFT). Catalyzes the oxidative deamination of AHDP (3-amino-5-[(4-hydroxyphenyl)methyl]-4,4-dimethyl-2-pyrrolidin-2-one), forming an alpha-keto amide moiety on the resulting molecule, which is called pre-mycofactocin (PMFT). This reaction occurs via a 5-[(4-hydroxyphenyl)methyl]-3-imino-4,4-dimethylpyrrolidin-2-one intermediate, which converts to PMFT. The alpha-keto amide moiety is the redox-active center for the redox activity of mycofactocin. The polypeptide is Pre-mycofactocin synthase (mftD) (Mycobacterium tuberculosis (strain CDC 1551 / Oshkosh)).